A 413-amino-acid chain; its full sequence is Transposon Ty4-H Gag polyprotein (413 aa).

The stretch at 39 to 115 (RKVSIKDEQV…IQLLETNENN (77 aa)) forms a coiled coil. Residues 380–413 (RQQQLKSSAKRTKVLEQDTKKVKQSVQQQKTGNY) form a disordered region. Residues 403-413 (QSVQQQKTGNY) show a composition bias toward low complexity.

Its function is as follows. Capsid protein (CA) is the structural component of the virus-like particle (VLP), forming the shell that encapsulates the retrotransposons dimeric RNA genome. The chain is Transposon Ty4-H Gag polyprotein (TY4A-H) from Saccharomyces cerevisiae (strain ATCC 204508 / S288c) (Baker's yeast).